Reading from the N-terminus, the 135-residue chain is Basic phospholipase A2 10 (135 aa).

7 disulfide bridges follow: C28–C87, C42–C134, C44–C60, C59–C115, C66–C108, C76–C101, and C94–C106. Positions 43, 45, and 47 each coordinate Ca(2+). The active site involves H63. D64 lines the Ca(2+) pocket. D109 is a catalytic residue.

It belongs to the phospholipase A2 family. Group I subfamily. D49 sub-subfamily. Ca(2+) is required as a cofactor. As to expression, expressed by the venom gland.

Its subcellular location is the secreted. It catalyses the reaction a 1,2-diacyl-sn-glycero-3-phosphocholine + H2O = a 1-acyl-sn-glycero-3-phosphocholine + a fatty acid + H(+). Its function is as follows. Snake venom phospholipase A2 (PLA2) that inhibits neuromuscular transmission by blocking acetylcholine release from the nerve termini. PLA2 catalyzes the calcium-dependent hydrolysis of the 2-acyl groups in 3-sn-phosphoglycerides. The protein is Basic phospholipase A2 10 of Bungarus fasciatus (Banded krait).